The following is a 99-amino-acid chain: 10 kDa heat shock protein, mitochondrial (99 aa).

This sequence belongs to the GroES chaperonin family. As to quaternary structure, homoheptamer arranged in a ring structure. 2 heptameric Hsp10 rings interact with a Hsp60 tetradecamer in the structure of a back-to-back double heptameric ring to form the symmetrical football complex.

It is found in the mitochondrion matrix. In terms of biological role, co-chaperonin implicated in mitochondrial protein import and macromolecular assembly. Together with Hsp60, facilitates the correct folding of imported proteins. May also prevent misfolding and promote the refolding and proper assembly of unfolded polypeptides generated under stress conditions in the mitochondrial matrix. The functional units of these chaperonins consist of heptameric rings of the large subunit Hsp60, which function as a back-to-back double ring. In a cyclic reaction, Hsp60 ring complexes bind one unfolded substrate protein per ring, followed by the binding of ATP and association with 2 heptameric rings of the co-chaperonin Hsp10. This leads to sequestration of the substrate protein in the inner cavity of Hsp60 where, for a certain period of time, it can fold undisturbed by other cell components. Synchronous hydrolysis of ATP in all Hsp60 subunits results in the dissociation of the chaperonin rings and the release of ADP and the folded substrate protein. The chain is 10 kDa heat shock protein, mitochondrial (hspe1) from Oryzias latipes (Japanese rice fish).